The sequence spans 588 residues: L-fucose isomerase (588 aa).

Catalysis depends on proton acceptor residues glutamate 335 and aspartate 359. Mn(2+) contacts are provided by glutamate 335, aspartate 359, and histidine 525.

The protein belongs to the L-fucose isomerase family. The cofactor is Mn(2+).

It is found in the cytoplasm. The enzyme catalyses L-fucose = L-fuculose. Its pathway is carbohydrate degradation; L-fucose degradation; L-lactaldehyde and glycerone phosphate from L-fucose: step 1/3. In terms of biological role, converts the aldose L-fucose into the corresponding ketose L-fuculose. The polypeptide is L-fucose isomerase (Streptococcus pneumoniae (strain P1031)).